The primary structure comprises 176 residues: Shikimate kinase (176 aa).

14–19 (GAGKST) serves as a coordination point for ATP. S18 provides a ligand contact to Mg(2+). Substrate is bound by residues D36, R60, and G83. Residue R121 participates in ATP binding. A substrate-binding site is contributed by R140.

Belongs to the shikimate kinase family. In terms of assembly, monomer. Mg(2+) serves as cofactor.

Its subcellular location is the cytoplasm. It catalyses the reaction shikimate + ATP = 3-phosphoshikimate + ADP + H(+). It participates in metabolic intermediate biosynthesis; chorismate biosynthesis; chorismate from D-erythrose 4-phosphate and phosphoenolpyruvate: step 5/7. In terms of biological role, catalyzes the specific phosphorylation of the 3-hydroxyl group of shikimic acid using ATP as a cosubstrate. The sequence is that of Shikimate kinase from Francisella tularensis subsp. tularensis (strain FSC 198).